We begin with the raw amino-acid sequence, 331 residues long: Adenosine deaminase (331 aa).

Zn(2+)-binding residues include histidine 12 and histidine 14. Substrate-binding residues include histidine 14, aspartate 16, and glycine 170. Histidine 197 is a Zn(2+) binding site. Catalysis depends on glutamate 200, which acts as the Proton donor. Aspartate 278 provides a ligand contact to Zn(2+). Aspartate 279 is a binding site for substrate.

This sequence belongs to the metallo-dependent hydrolases superfamily. Adenosine and AMP deaminases family. Adenosine deaminase subfamily. The cofactor is Zn(2+).

It catalyses the reaction adenosine + H2O + H(+) = inosine + NH4(+). It carries out the reaction 2'-deoxyadenosine + H2O + H(+) = 2'-deoxyinosine + NH4(+). In terms of biological role, catalyzes the hydrolytic deamination of adenosine and 2-deoxyadenosine. The polypeptide is Adenosine deaminase (Shewanella baltica (strain OS223)).